Reading from the N-terminus, the 57-residue chain is Large ribosomal subunit protein bL32 (57 aa).

Residues 1-19 show a composition bias toward basic residues; that stretch reads MAVPKRRKSRSNTRSRRSQ. Residues 1 to 22 are disordered; the sequence is MAVPKRRKSRSNTRSRRSQWKA.

Belongs to the bacterial ribosomal protein bL32 family.

This chain is Large ribosomal subunit protein bL32, found in Mycobacterium tuberculosis (strain ATCC 25177 / H37Ra).